Consider the following 220-residue polypeptide: Small ribosomal subunit protein mS42 (220 aa).

This sequence belongs to the mitochondrion-specific ribosomal protein mS42 family. In terms of assembly, component of the mitochondrial small ribosomal subunit (mt-SSU). Mature yeast 74S mitochondrial ribosomes consist of a small (37S) and a large (54S) subunit. The 37S small subunit contains a 15S ribosomal RNA (15S mt-rRNA) and at least 32 different proteins. The 54S large subunit contains a 21S rRNA (21S mt-rRNA) and at least 45 different proteins. mS43 forms a dimer with mS42, building a large protuberance adjacent to the mRNA channel exit in the mt-SSU body.

The protein resides in the mitochondrion. Component of the mitochondrial ribosome (mitoribosome), a dedicated translation machinery responsible for the synthesis of mitochondrial genome-encoded proteins, including at least some of the essential transmembrane subunits of the mitochondrial respiratory chain. The mitoribosomes are attached to the mitochondrial inner membrane and translation products are cotranslationally integrated into the membrane. This chain is Small ribosomal subunit protein mS42, found in Schizosaccharomyces pombe (strain 972 / ATCC 24843) (Fission yeast).